A 124-amino-acid chain; its full sequence is UPF0102 protein Msil_0293 (124 aa).

The protein belongs to the UPF0102 family.

In Methylocella silvestris (strain DSM 15510 / CIP 108128 / LMG 27833 / NCIMB 13906 / BL2), this protein is UPF0102 protein Msil_0293.